Consider the following 107-residue polypeptide: Putative pterin-4-alpha-carbinolamine dehydratase (107 aa).

It belongs to the pterin-4-alpha-carbinolamine dehydratase family.

It carries out the reaction (4aS,6R)-4a-hydroxy-L-erythro-5,6,7,8-tetrahydrobiopterin = (6R)-L-erythro-6,7-dihydrobiopterin + H2O. In Paracoccus denitrificans (strain Pd 1222), this protein is Putative pterin-4-alpha-carbinolamine dehydratase.